Reading from the N-terminus, the 438-residue chain is Serine hydroxymethyltransferase (438 aa).

Residues Leu133 and 137-139 (GHL) each bind (6S)-5,6,7,8-tetrahydrofolate. N6-(pyridoxal phosphate)lysine is present on Lys242.

It belongs to the SHMT family. As to quaternary structure, homodimer. Requires pyridoxal 5'-phosphate as cofactor.

It localises to the cytoplasm. The catalysed reaction is (6R)-5,10-methylene-5,6,7,8-tetrahydrofolate + glycine + H2O = (6S)-5,6,7,8-tetrahydrofolate + L-serine. The protein operates within one-carbon metabolism; tetrahydrofolate interconversion. It participates in amino-acid biosynthesis; glycine biosynthesis; glycine from L-serine: step 1/1. Its function is as follows. Catalyzes the reversible interconversion of serine and glycine with tetrahydrofolate (THF) serving as the one-carbon carrier. This reaction serves as the major source of one-carbon groups required for the biosynthesis of purines, thymidylate, methionine, and other important biomolecules. Also exhibits THF-independent aldolase activity toward beta-hydroxyamino acids, producing glycine and aldehydes, via a retro-aldol mechanism. The polypeptide is Serine hydroxymethyltransferase (Brucella suis (strain ATCC 23445 / NCTC 10510)).